The sequence spans 431 residues: Polygalacturonase ADPG1 (431 aa).

The signal sequence occupies residues M1 to A23. PbH1 repeat units lie at residues C223–N249 and T250–D271. D264 (proton donor) is an active-site residue. The active site involves H287. 3 PbH1 repeats span residues V303–T324, A332–Q353, and C398–V420.

It belongs to the glycosyl hydrolase 28 family. Expressed in flower buds and siliques, in the dehiscence zone of anthers (stomium cells) and maturing siliques. Expressed in stigma during pollen tube growth. Not expressed in seeds or in the floral part or leaf abscission zone but found at the junction between the seed and the funiculus at the site of seed abscission.

It localises to the secreted. The protein localises to the cell wall. Its subcellular location is the cytoplasm. It carries out the reaction (1,4-alpha-D-galacturonosyl)n+m + H2O = (1,4-alpha-D-galacturonosyl)n + (1,4-alpha-D-galacturonosyl)m.. Functionally, polygalacturonase involved in cell separation in the final stages of pod shatter and in anther dehiscence. Not involved in floral organ abscission. The sequence is that of Polygalacturonase ADPG1 (ADPG1) from Arabidopsis thaliana (Mouse-ear cress).